A 122-amino-acid chain; its full sequence is UPF0102 protein Rleg2_4331 (122 aa).

The protein belongs to the UPF0102 family.

The sequence is that of UPF0102 protein Rleg2_4331 from Rhizobium leguminosarum bv. trifolii (strain WSM2304).